The chain runs to 158 residues: Inner membrane assembly complex subunit 17 (158 aa).

A mitochondrion-targeting transit peptide spans 1–15; the sequence is MFRPLVKRVVTRRFL. At 16–85 the chain is on the mitochondrial matrix side; that stretch reads AAANNSNAHI…KTQETSLKKF (70 aa). Residues 86-108 traverse the membrane as a helical segment; the sequence is VRPAWIFLLMGSIVYLSCHYVWW. Over 109–158 the chain is Mitochondrial intermembrane; it reads KLDYEEKELEYTHKVHQLESELAALNEAHNSSVSSDKNSKRSSRKWYKFW. Residues 110-140 adopt a coiled-coil conformation; the sequence is LDYEEKELEYTHKVHQLESELAALNEAHNSS.

Belongs to the INA17 family. As to quaternary structure, component of the inner membrane assembly (INA) complex, composed of INA17 and INA22. Interacts with a subset of F(1)F(0)-ATP synthase subunits of the F(1)-domain and the peripheral stalk.

It localises to the mitochondrion inner membrane. In terms of biological role, component of the INA complex (INAC) that promotes the biogenesis of mitochondrial F(1)F(0)-ATP synthase. INAC facilitates the assembly of the peripheral stalk and promotes the assembly of the catalytic F(1)-domain with the membrane-embedded F(0)-domain. The polypeptide is Inner membrane assembly complex subunit 17 (Kluyveromyces lactis (strain ATCC 8585 / CBS 2359 / DSM 70799 / NBRC 1267 / NRRL Y-1140 / WM37) (Yeast)).